We begin with the raw amino-acid sequence, 155 residues long: IFN signaling evasion protein OPG029 (155 aa).

This sequence belongs to the orthopoxvirus OPG029 family. In terms of assembly, interacts with host TANK, TBKBP1 and AZI2; these interactions prevent interferon production. Interacts with host STAT2.

Prevents establishment of cellular antiviral state by blocking virus-induced phosphorylation and activation of interferon regulatory factors 3/IRF3 and 7/IRF7, transcription factors critical for the induction of interferons alpha and beta. This blockage is produced through the inhibition of host TBK1, by binding host TBK1 adapter proteins TBKBP1 and AZI2, thereby producing a strong inhibition of the phosphorylation and activation of IRF3 and IRF7. Also acts as an inhibitor of the cellular response to type I IFN by interacting with host STAT2. Mechanistically, exerts its inhibitory effect after host ISGF3 complex (composed of STAT1, STAT2 and IRF9) binding to the interferon stimulated response element (ISRE). The chain is IFN signaling evasion protein OPG029 (OPG019) from Cynomys gunnisoni (Gunnison's prairie dog).